The following is a 316-amino-acid chain: N-acetylmuramic acid 6-phosphate etherase (316 aa).

The SIS domain occupies 68–231; the sequence is ITDRLRSGGR…STCAMVRLGK (164 aa). Residue E96 is the Proton donor of the active site. Residue E127 is part of the active site.

This sequence belongs to the GCKR-like family. MurNAc-6-P etherase subfamily. As to quaternary structure, homodimer.

It catalyses the reaction N-acetyl-D-muramate 6-phosphate + H2O = N-acetyl-D-glucosamine 6-phosphate + (R)-lactate. Its pathway is amino-sugar metabolism; N-acetylmuramate degradation. Functionally, specifically catalyzes the cleavage of the D-lactyl ether substituent of MurNAc 6-phosphate, producing GlcNAc 6-phosphate and D-lactate. This is N-acetylmuramic acid 6-phosphate etherase from Prochlorococcus marinus (strain MIT 9303).